A 924-amino-acid polypeptide reads, in one-letter code: DNA repair and recombination protein RDH54 (924 aa).

Residues 1 to 10 (MQIPKYENKP) show a composition bias toward basic and acidic residues. Disordered stretches follow at residues 1–21 (MQIPKYENKPFKPPRRVGSNK) and 155–182 (EALSQNMGNPNPPTTSTTETVPSTKNDG). Low complexity predominate over residues 168–178 (TTSTTETVPST). Residues 299–487 (LENDSDISGC…FTIIDFINPG (189 aa)) enclose the Helicase ATP-binding domain. 346-353 (IPLTGLCK) contacts ATP. Positions 472–475 (NDLN) match the DEGH box motif. Lys615 participates in a covalent cross-link: Glycyl lysine isopeptide (Lys-Gly) (interchain with G-Cter in ubiquitin). A Helicase C-terminal domain is found at 631 to 790 (KLRVLMTLLE…DSEMRNKESS (160 aa)).

Belongs to the SNF2/RAD54 helicase family. In terms of assembly, interacts with RAD51 and DMC1.

Its subcellular location is the nucleus. The enzyme catalyses ATP + H2O = ADP + phosphate + H(+). Involved in the recombinational repair of double-strand breaks (DSB) in DNA during mitosis and meiosis. Has DNA dependent ATPase activity. Promotes D-loop (displacement loop) formation with RAD51 recombinase. Modifies the topology of double-stranded DNA during the D-loop reaction to facilitate the invasion of the homologous duplex molecule by the initiating single-stranded DNA substrate. Required for adaptation from G2/M checkpoint arrest induced by a double strand break, by participating in monitoring the extent of single-stranded DNA produced by resection of DNA ends. This role is distinct from its roles in recombination. Promotes colocalization of RAD51 and DMC1 during meiotic recombination. Involved in crossover interference. The polypeptide is DNA repair and recombination protein RDH54 (RDH54) (Saccharomyces cerevisiae (strain AWRI1631) (Baker's yeast)).